We begin with the raw amino-acid sequence, 156 residues long: CD-NTase/cGAS isopeptidase (156 aa).

An MPN domain is found at 16 to 156; sequence LVVIMGHVVT…LITVFKKIES (141 aa). The active-site Proton donor/acceptor is Glu39. 3 residues coordinate Zn(2+): His101, His103, and Asp114. Residues 101–114 carry the JAMM motif motif; sequence HTHPEDRPFPSATD.

It belongs to the peptidase M67B family. Cap3 isopeptidase subfamily. It depends on Zn(2+) as a cofactor.

Its activity is regulated as follows. Cleavage of conjugated proteins is inhibited by EDTA. Metalloprotease priming reversal component of a CBASS system. CBASS (cyclic oligonucleotide-based antiphage signaling system) provides immunity against bacteriophages. The CD-NTase protein (DncV) synthesizes cyclic nucleotides in response to infection; these serve as specific second messenger signals. The signals activate a diverse range of effectors, leading to bacterial cell death and thus abortive phage infection. A type II-A(GA) CBASS system. Its function is as follows. Reverses the primed state of DncV, the CD-NTase. Cleaves a DncV-GFP (green fluorescent protein) fusion protein precisely at the C-terminus of DncV. Overexpression decreases the efficacy of CBASS protection against phages T2, T4, T5 and T6, blocks formation of DncV-conjugates in vivo, and inhibits in vivo activation of DncV. Antagonism of phage defense upon overexpression is CBASS-system specific, Cap3 from this bacteria only antagonizes its cognate CBASS system and not that of C.freundii, E.coli or E.hormaechei. In terms of biological role, protects E.coli against phage infection. When the CBASS operon (capV-dncV-cap2-cap3) is introduced in E.coli MG1655 there is about 100-fold protection against phages P1 and T2. When the operon is introduced in E.coli MG1655 there is a more than 10(3) decrease in the efficiency of T2 plaque formation. Protects 100-fold against phage T5, offers no protection against T7. When the operon is introduced in E.coli MG1655 it protects against phages T2, T4, T5 and T6. Another paper shows the operon confers protection against phages P1, T2, T5 and T6 but not T4 or lambda. In Vibrio cholerae serotype O1 (strain ATCC 39315 / El Tor Inaba N16961), this protein is CD-NTase/cGAS isopeptidase.